The following is a 1439-amino-acid chain: Myomesin-3 (1439 aa).

The tract at residues 1-57 (MTLPHSPGSAGEPQASQTVQVHRLEHRQEEEQKEERQHSLQMGSSVQRRTYRSSEEE) is disordered. Basic and acidic residues predominate over residues 22–38 (HRLEHRQEEEQKEERQH). Residues 39 to 48 (SLQMGSSVQR) show a composition bias toward polar residues. Residues 119–149 (QRLLRQRRDWKALRQRTEEKVREAKELIELC) adopt a coiled-coil conformation. Ig-like C2-type domains are found at residues 154–246 (PWFW…AKVL) and 269–362 (PSAE…AYVF). Fibronectin type-III domains are found at residues 376 to 471 (SPLN…TGDY), 504 to 599 (APTN…LKGK), 605 to 698 (PPAQ…VKQA), 704 to 799 (APYD…CKEW), and 806 to 901 (PPYD…LEDK). 2 consecutive Ig-like C2-type domains span residues 1122-1207 (PYFQ…LDLT) and 1336-1425 (AKVV…VTIS).

Homodimer. As to expression, mainly expressed in slow muscle, extraocular muscle and embryonic/neonatal skeletal muscle (at protein level). Expression in skeletal muscle is fiber type specific, with the highest levels in type IIA fibers (intermediate speed) and lower levels in type I fibers.

The protein resides in the cytoplasm. It is found in the myofibril. The protein localises to the sarcomere. It localises to the m line. In terms of biological role, may link the intermediate filament cytoskeleton to the M-disk of the myofibrils in striated muscle. This Mus musculus (Mouse) protein is Myomesin-3 (Myom3).